The sequence spans 775 residues: Endothelin-converting enzyme-like 1 (775 aa).

Over 1–61 (MEAPYSMTAH…LPRWNRREVC (61 aa)) the chain is Cytoplasmic. The segment at 23–51 (CGTGGARGTSLPPGFPRSSGRSASGARSG) is disordered. Positions 32 to 51 (SLPPGFPRSSGRSASGARSG) are enriched in low complexity. The chain crosses the membrane as a helical; Signal-anchor for type II membrane protein span at residues 62 to 82 (LLSGLVFAAGLCAILAAMLAL). The Lumenal segment spans residues 83 to 775 (KYLGPGAAGT…MNPVHKCSVW (693 aa)). The region spanning 99–775 (GCPERKAFAR…MNPVHKCSVW (677 aa)) is the Peptidase M13 domain. Cystine bridges form between Cys124–Cys760, Cys132–Cys720, Cys188–Cys441, and Cys649–Cys772. 2 N-linked (GlcNAc...) asparagine glycosylation sites follow: Asn255 and Asn322. His612 lines the Zn(2+) pocket. Glu613 is a catalytic residue. Zn(2+) is bound at residue His616. Residue Asn656 is glycosylated (N-linked (GlcNAc...) asparagine). Glu672 contributes to the Zn(2+) binding site. Catalysis depends on Asp676, which acts as the Proton donor.

Belongs to the peptidase M13 family. The cofactor is Zn(2+). As to expression, highly expressed in the CNS, in particular in neurons of the caudate putamen, diagonal band, the paraventricular nucleus of the thalamus, part of the hypothalamus, in cranial motor nuclei, inferior olive, and substantia gelatinosa of the spinal tract trigeminal nucleus. Not detected in cerebral cortex, hippocampus and cerebellum.

Its subcellular location is the membrane. Its function is as follows. May contribute to the degradation of peptide hormones and be involved in the inactivation of neuronal peptides. Cleaves the synthetic substrate Z-Gly-Gly-Leu-pNA and releases pNA. May protect against C2-ceramide-induced apoptosis. In Rattus norvegicus (Rat), this protein is Endothelin-converting enzyme-like 1 (Ecel1).